A 239-amino-acid polypeptide reads, in one-letter code: Ribonuclease 3 (239 aa).

In terms of domain architecture, RNase III spans 12 to 137 (RLTLEAAIGH…LIAALYLDGG (126 aa)). Glutamate 50 serves as a coordination point for Mg(2+). Aspartate 54 is a catalytic residue. Residues aspartate 123 and glutamate 126 each contribute to the Mg(2+) site. Glutamate 126 is a catalytic residue. Residues 162–231 (DAKTELQEWA…ATRILEREGI (70 aa)) enclose the DRBM domain.

This sequence belongs to the ribonuclease III family. In terms of assembly, homodimer. It depends on Mg(2+) as a cofactor.

It is found in the cytoplasm. It carries out the reaction Endonucleolytic cleavage to 5'-phosphomonoester.. Functionally, digests double-stranded RNA. Involved in the processing of primary rRNA transcript to yield the immediate precursors to the large and small rRNAs (23S and 16S). Processes some mRNAs, and tRNAs when they are encoded in the rRNA operon. Processes pre-crRNA and tracrRNA of type II CRISPR loci if present in the organism. This is Ribonuclease 3 from Rhizobium rhizogenes (strain K84 / ATCC BAA-868) (Agrobacterium radiobacter).